The following is a 216-amino-acid chain: Thiopurine S-methyltransferase (216 aa).

S-adenosyl-L-methionine-binding residues include Trp-10, Leu-45, Glu-66, and Arg-123.

Belongs to the class I-like SAM-binding methyltransferase superfamily. TPMT family.

Its subcellular location is the cytoplasm. It carries out the reaction S-adenosyl-L-methionine + a thiopurine = S-adenosyl-L-homocysteine + a thiopurine S-methylether.. This Pseudomonas entomophila (strain L48) protein is Thiopurine S-methyltransferase.